The following is a 427-amino-acid chain: Trigger factor (427 aa).

The PPIase FKBP-type domain maps to 163–248; that stretch reads GDTVILDFEG…LHEIKTKEVP (86 aa).

It belongs to the FKBP-type PPIase family. Tig subfamily.

It localises to the cytoplasm. The catalysed reaction is [protein]-peptidylproline (omega=180) = [protein]-peptidylproline (omega=0). Involved in protein export. Acts as a chaperone by maintaining the newly synthesized protein in an open conformation. Functions as a peptidyl-prolyl cis-trans isomerase. This is Trigger factor from Listeria innocua serovar 6a (strain ATCC BAA-680 / CLIP 11262).